The following is a 137-amino-acid chain: Small ribosomal subunit protein uS12 (137 aa).

A disordered region spans residues 33–57 (KVQTNVSSPQKRGVATRVGTMTPKK). Asp-102 bears the 3-methylthioaspartic acid mark.

It belongs to the universal ribosomal protein uS12 family. In terms of assembly, part of the 30S ribosomal subunit. Contacts proteins S8 and S17. May interact with IF1 in the 30S initiation complex.

With S4 and S5 plays an important role in translational accuracy. In terms of biological role, interacts with and stabilizes bases of the 16S rRNA that are involved in tRNA selection in the A site and with the mRNA backbone. Located at the interface of the 30S and 50S subunits, it traverses the body of the 30S subunit contacting proteins on the other side and probably holding the rRNA structure together. The combined cluster of proteins S8, S12 and S17 appears to hold together the shoulder and platform of the 30S subunit. The protein is Small ribosomal subunit protein uS12 of Streptococcus thermophilus (strain CNRZ 1066).